A 234-amino-acid polypeptide reads, in one-letter code: Small ribosomal subunit protein uS3 (234 aa).

The region spanning 39–107 is the KH type-2 domain; the sequence is IRKFLKKELY…EVSINIKEVK (69 aa).

This sequence belongs to the universal ribosomal protein uS3 family. Part of the 30S ribosomal subunit. Forms a tight complex with proteins S10 and S14.

Its function is as follows. Binds the lower part of the 30S subunit head. Binds mRNA in the 70S ribosome, positioning it for translation. This is Small ribosomal subunit protein uS3 from Helicobacter pylori (strain G27).